The sequence spans 216 residues: MDEVANALAVSQTMMEKMQKLEISKNYDVEKFETLLRLPARDVNTFMEKEAKKTDDEKMTDMDRRIKRIREDKTDRAARTLQKYFRKIRVKGEQNHINKRISKIPAKRRVVLLEQIRQKMGEQQPIRRFGGYQVIRAVELHKGKQKLQKDWLAKLSIDVNFHDKNLSRPNSPTHFIANSIPTLIRKKAEMKHAEKMQEIDSSIMDIYCGFQKDNLH.

This is an uncharacterized protein from Caenorhabditis elegans.